The following is a 593-amino-acid chain: A-type ATP synthase subunit A (593 aa).

An ATP-binding site is contributed by 236–243; sequence GPFGSGKT.

This sequence belongs to the ATPase alpha/beta chains family. In terms of assembly, has multiple subunits with at least A(3), B(3), C, D, E, F, H, I and proteolipid K(x).

Its subcellular location is the cell membrane. It carries out the reaction ATP + H2O + 4 H(+)(in) = ADP + phosphate + 5 H(+)(out). Its function is as follows. Produces ATP from ADP in the presence of a proton gradient across the membrane. The archaeal alpha chain is a catalytic subunit. In terms of biological role, component of the A-type ATP synthase that produces ATP from ADP in the presence of a proton gradient across the membrane. The A chain is the catalytic subunit. This is A-type ATP synthase subunit A from Pyrobaculum aerophilum (strain ATCC 51768 / DSM 7523 / JCM 9630 / CIP 104966 / NBRC 100827 / IM2).